Consider the following 390-residue polypeptide: Heat stress transcription factor B-2b (390 aa).

The interval 165 to 212 (TRDGSPVLSGEEQVISSSSSPEPPLVLPQAPSGSGSGGVASGDVGDEN) is disordered. The stretch at 206-237 (GDVGDENERLRRENAQLARELSQMRKLCNNIL) forms a coiled coil. The interval 215-244 (LRRENAQLARELSQMRKLCNNILLLMSKYA) is hydrophobic repeat HR-A/B. The Nuclear localization signal signature appears at 318–322 (RKRMR). Residues 322–363 (RHDGGGDDDHAATVKAEPMDGRPHGKDEQSAETQAWPIYRPR) form a disordered region. A compositionally biased stretch (basic and acidic residues) spans 323–350 (HDGGGDDDHAATVKAEPMDGRPHGKDEQ).

The protein belongs to the HSF family. Class B subfamily. Homotrimer. Post-translationally, exhibits temperature-dependent phosphorylation.

It is found in the nucleus. Transcriptional regulator that specifically binds DNA of heat shock promoter elements (HSE). This chain is Heat stress transcription factor B-2b (HSFB2B), found in Oryza sativa subsp. japonica (Rice).